Consider the following 918-residue polypeptide: Translation initiation factor IF-2 (918 aa).

A disordered region spans residues 39 to 321 (DDASEKHLRN…KRDGRMKETT (283 aa)). Over residues 95–146 (KSSNNESTTRNNNNNKNGNQNRNNTNGRPNNNQNRPNNNRNQNNNRNGNRPN) the composition is skewed to low complexity. Residues 148–158 (PKRDEKQDRIR) are compositionally biased toward basic and acidic residues. The segment covering 159–174 (ASVAEAARMAAQANRE) has biased composition (low complexity). Residues 180–190 (PQANRQRTNSA) show a composition bias toward polar residues. Low complexity-rich tracts occupy residues 201-231 (NNQN…NNRN), 237-267 (SRPN…TANN), and 278-296 (GRNN…QNRP). Residues 302–313 (RKNKKRNRKAKR) are compositionally biased toward basic residues. The 170-residue stretch at 419–588 (SRPPVVTIMG…LLQAEVLELK (170 aa)) folds into the tr-type G domain. The tract at residues 428–435 (GHVDHGKT) is G1. 428–435 (GHVDHGKT) serves as a coordination point for GTP. The G2 stretch occupies residues 453–457 (GITQG). Positions 474–477 (DTPG) are G3. Residues 474-478 (DTPGH) and 528-531 (NKID) contribute to the GTP site. The tract at residues 528-531 (NKID) is G4. Positions 564–566 (SAK) are G5.

Belongs to the TRAFAC class translation factor GTPase superfamily. Classic translation factor GTPase family. IF-2 subfamily.

It is found in the cytoplasm. One of the essential components for the initiation of protein synthesis. Protects formylmethionyl-tRNA from spontaneous hydrolysis and promotes its binding to the 30S ribosomal subunits. Also involved in the hydrolysis of GTP during the formation of the 70S ribosomal complex. The sequence is that of Translation initiation factor IF-2 from Pediococcus pentosaceus (strain ATCC 25745 / CCUG 21536 / LMG 10740 / 183-1w).